Here is a 288-residue protein sequence, read N- to C-terminus: Protein PGR (288 aa).

The next 7 helical transmembrane spans lie at 1 to 21, 29 to 49, 91 to 111, 123 to 143, 177 to 197, 210 to 230, and 268 to 288; these read METS…LIAF, LDLS…TAGF, VLCN…LTGW, IVTA…GDTW, LLAA…FGLF, LLVI…DSIL, and VNFV…VYIF.

Belongs to the TMEM19 family. As to expression, expressed in the vasculature of leaves, roots, inflorescences, siliques, anther filaments and sepals. Detected primarily in the phloem tissues, including in the root ans shoot apical meristems.

The protein localises to the cell membrane. In terms of biological role, involved in the glucose-triggered developmental leaf growth process. This Arabidopsis thaliana (Mouse-ear cress) protein is Protein PGR.